The chain runs to 373 residues: Centrosomal protein of 41 kDa (373 aa).

Residues Leu91 to Ser137 are disordered. Residues Ser96 and Ser99 each carry the phosphoserine modification. Thr109 bears the Phosphothreonine mark. A phosphoserine mark is found at Ser114 and Ser121. Positions Glu116–Ser137 are enriched in polar residues. The Rhodanese domain maps to Pro169–Val266. Residues Asp317–Lys373 form a disordered region. Positions Ser325–Gly334 are enriched in polar residues. At Arg343 the chain carries Omega-N-methylarginine. A compositionally biased stretch (polar residues) spans Asn347–His366.

This sequence belongs to the CEP41 family. In terms of assembly, found in a complex with TTLL6.

The protein resides in the cytoplasm. The protein localises to the cytoskeleton. It is found in the microtubule organizing center. It localises to the centrosome. Its subcellular location is the cell projection. The protein resides in the cilium. The protein localises to the cilium basal body. In terms of biological role, required during ciliogenesis for tubulin glutamylation in cilium. Probably acts by participating in the transport of TTLL6, a tubulin polyglutamylase, between the basal body and the cilium. This chain is Centrosomal protein of 41 kDa (Cep41), found in Mus musculus (Mouse).